A 572-amino-acid polypeptide reads, in one-letter code: Na(+)/citrate cotransporter (572 aa).

8 consecutive transmembrane segments (helical) span residues 13–33, 53–73, 80–100, 124–144, 218–238, 255–275, 315–335, and 357–377; these read SFAI…LIPD, VIPV…LKVL, IQYM…AVAV, LMLG…NTAA, SASI…VLLG, SWFG…WLWL, SLSY…ILWF, and HITD…IPSQ. N-linked (GlcNAc...) asparagine glycosylation occurs at Asn382. The next 4 membrane-spanning stretches (helical) occupy residues 410-430, 443-463, 491-511, and 532-552; these read VPWD…GCET, PLRL…VAMT, PLYV…LPVA, and TGLI…NTWG. Asn566 carries N-linked (GlcNAc...) asparagine glycosylation.

The protein belongs to the SLC13A/DASS transporter (TC 2.A.47) family. NADC subfamily. As to quaternary structure, homodimer.

It localises to the cell membrane. The enzyme catalyses citrate(out) + 4 Na(+)(out) = citrate(in) + 4 Na(+)(in). With respect to regulation, inhibited by Li(+). Functionally, high-affinity sodium/citrate cotransporter that mediates citrate entry into cells, which is a critical participant of biochemical pathways. May function in various metabolic processes in which citrate has a critical role such as energy production (Krebs cycle), fatty acid synthesis, cholesterol synthesis, glycolysis, and gluconeogenesis. Transports citrate into the cell in a Na(+)-dependent manner, recognizing the trivalent form of citrate (physiological pH) rather than the divalent form. Can recognizes succinate as a substrate, but its affinity for succinate is several fold lower than for citrate. The stoichiometry is probably 4 Na(+) for each carboxylate, irrespective of whether the translocated substrate is divalent or trivalent, rendering the process electrogenic. Involved in the regulation of citrate levels in the brain. In Mus musculus (Mouse), this protein is Na(+)/citrate cotransporter (Slc13a5).